We begin with the raw amino-acid sequence, 157 residues long: Homeobox protein DBX2 (157 aa).

Residues G9–K68 constitute a DNA-binding region (homeobox). Residues S105–D157 form a disordered region. Over residues P118 to P139 the composition is skewed to polar residues.

It belongs to the H2.0 homeobox family. Localized to the central nervous system during embryogenesis. It is found restricted to the rostro-caudal and dorso-ventral regions of the hindbrain. In the ventricular zone of the spinal cord, it localizes to the dorsal part of the basal plate. In the adult, it is detected in ovary.

Its subcellular location is the nucleus. Functionally, appears to perform a very early function in establishing the identity of a subset of cells that originate in the region of the ventricular zone in the developing spinal cord and in the hindbrain. This Gallus gallus (Chicken) protein is Homeobox protein DBX2 (DBX2).